Here is a 190-residue protein sequence, read N- to C-terminus: MKLTNLALAFTLFGASAVAFAHADHDHKKADNSSVEKLVVQVQQLDPVKGNKDVGTVEITESAYGLVFTPHLHGLAQGLHGFHIHQNPSCEPKEKDGKLVAGLGAGGHWDPKETKQHGYPWSDNAHLGDLPALFVEHDGSATNPVLAPRLKKLDEVKGHSLMIHEGGDNHSDHPAPLGGGGPRMACGVIK.

A signal peptide spans 1–23; that stretch reads MKLTNLALAFTLFGASAVAFAHA. Residues histidine 83, histidine 85, and histidine 108 each contribute to the Cu cation site. A disulfide bond links cysteine 90 and cysteine 186. Positions 108, 117, 126, and 129 each coordinate Zn(2+). The interval 162–181 is disordered; it reads MIHEGGDNHSDHPAPLGGGG. Histidine 164 serves as a coordination point for Cu cation.

The protein belongs to the Cu-Zn superoxide dismutase family. In terms of assembly, homodimer. Requires Cu cation as cofactor. The cofactor is Zn(2+).

The protein resides in the periplasm. It carries out the reaction 2 superoxide + 2 H(+) = H2O2 + O2. In terms of biological role, destroys radicals which are normally produced within the cells and which are toxic to biological systems. In Actinobacillus pleuropneumoniae (Haemophilus pleuropneumoniae), this protein is Superoxide dismutase [Cu-Zn] (sodC).